The following is a 219-amino-acid chain: Triosephosphate isomerase (219 aa).

6–8 contacts substrate; the sequence is NYK. The active-site Electrophile is His90. Catalysis depends on Glu138, which acts as the Proton acceptor. Residues Ile143, Gly178, and 199-200 contribute to the substrate site; that span reads AS.

This sequence belongs to the triosephosphate isomerase family. In terms of assembly, homotetramer; dimer of dimers.

The protein localises to the cytoplasm. The enzyme catalyses D-glyceraldehyde 3-phosphate = dihydroxyacetone phosphate. The protein operates within carbohydrate biosynthesis; gluconeogenesis. It participates in carbohydrate degradation; glycolysis; D-glyceraldehyde 3-phosphate from glycerone phosphate: step 1/1. In terms of biological role, involved in the gluconeogenesis. Catalyzes stereospecifically the conversion of dihydroxyacetone phosphate (DHAP) to D-glyceraldehyde-3-phosphate (G3P). This Methanocaldococcus jannaschii (strain ATCC 43067 / DSM 2661 / JAL-1 / JCM 10045 / NBRC 100440) (Methanococcus jannaschii) protein is Triosephosphate isomerase.